The following is a 188-amino-acid chain: Hypoxanthine/guanine phosphoribosyltransferase (188 aa).

This sequence belongs to the purine/pyrimidine phosphoribosyltransferase family. Archaeal HPRT subfamily. As to quaternary structure, homodimer.

The protein localises to the cytoplasm. The enzyme catalyses IMP + diphosphate = hypoxanthine + 5-phospho-alpha-D-ribose 1-diphosphate. It carries out the reaction GMP + diphosphate = guanine + 5-phospho-alpha-D-ribose 1-diphosphate. Its pathway is purine metabolism; IMP biosynthesis via salvage pathway; IMP from hypoxanthine: step 1/1. Its function is as follows. Catalyzes a salvage reaction resulting in the formation of IMP that is energically less costly than de novo synthesis. The chain is Hypoxanthine/guanine phosphoribosyltransferase from Methanobrevibacter ruminantium (strain ATCC 35063 / DSM 1093 / JCM 13430 / OCM 146 / M1) (Methanobacterium ruminantium).